Reading from the N-terminus, the 128-residue chain is Large ribosomal subunit protein bL20 (128 aa).

This sequence belongs to the bacterial ribosomal protein bL20 family.

Functionally, binds directly to 23S ribosomal RNA and is necessary for the in vitro assembly process of the 50S ribosomal subunit. It is not involved in the protein synthesizing functions of that subunit. The protein is Large ribosomal subunit protein bL20 of Anaplasma marginale (strain Florida).